We begin with the raw amino-acid sequence, 260 residues long: Ribonuclease PH (260 aa).

Phosphate contacts are provided by residues Arg87 and 125–127 (GTR). A disordered region spans residues 232-260 (LAAPPAAGPPAPERAGAGSGSGGKGTGSR). Residues 248 to 260 (AGSGSGGKGTGSR) are compositionally biased toward gly residues.

This sequence belongs to the RNase PH family. In terms of assembly, homohexameric ring arranged as a trimer of dimers.

It catalyses the reaction tRNA(n+1) + phosphate = tRNA(n) + a ribonucleoside 5'-diphosphate. Phosphorolytic 3'-5' exoribonuclease that plays an important role in tRNA 3'-end maturation. Removes nucleotide residues following the 3'-CCA terminus of tRNAs; can also add nucleotides to the ends of RNA molecules by using nucleoside diphosphates as substrates, but this may not be physiologically important. Probably plays a role in initiation of 16S rRNA degradation (leading to ribosome degradation) during starvation. This chain is Ribonuclease PH, found in Parafrankia sp. (strain EAN1pec).